The following is a 450-amino-acid chain: Phosphoglucosamine mutase (450 aa).

Residue Ser-101 is the Phosphoserine intermediate of the active site. Mg(2+) is bound by residues Ser-101, Asp-240, Asp-242, and Asp-244. Ser-101 is subject to Phosphoserine.

The protein belongs to the phosphohexose mutase family. It depends on Mg(2+) as a cofactor. Post-translationally, activated by phosphorylation.

It catalyses the reaction alpha-D-glucosamine 1-phosphate = D-glucosamine 6-phosphate. Catalyzes the conversion of glucosamine-6-phosphate to glucosamine-1-phosphate. This is Phosphoglucosamine mutase from Streptococcus pneumoniae serotype 19F (strain G54).